The sequence spans 437 residues: UDP-N-acetylmuramate--L-alanine ligase (437 aa).

Position 108–114 (108–114 (GAHGKTS)) interacts with ATP.

It belongs to the MurCDEF family.

Its subcellular location is the cytoplasm. It carries out the reaction UDP-N-acetyl-alpha-D-muramate + L-alanine + ATP = UDP-N-acetyl-alpha-D-muramoyl-L-alanine + ADP + phosphate + H(+). It functions in the pathway cell wall biogenesis; peptidoglycan biosynthesis. In terms of biological role, cell wall formation. The chain is UDP-N-acetylmuramate--L-alanine ligase from Staphylococcus epidermidis (strain ATCC 12228 / FDA PCI 1200).